A 237-amino-acid polypeptide reads, in one-letter code: MLTRKQQELLLFIHERLKDGGVSPSFDEMKDALGLKSKSGIHRLITGLEERGFIRRLPHRARALEVLRLPEQPAPLRVAPRTEEPVRFRPNVIRGDFRGALPGREARGDAEAVSLPLYGRIAAGLPIEALRDTTASIDVPTGLIASGEHYALEVAGDSMVDAGILDGDTVIIQRCETAENGTVIVALVDDNEVTLKRLRRKGNSIALEPANPAYETRVFGADRVRIQGRLVGLIRRY.

The H-T-H motif DNA-binding region spans 26–46 (FDEMKDALGLKSKSGIHRLIT). Active-site for autocatalytic cleavage activity residues include Ser-158 and Lys-196.

It belongs to the peptidase S24 family. Homodimer.

It carries out the reaction Hydrolysis of Ala-|-Gly bond in repressor LexA.. In terms of biological role, represses a number of genes involved in the response to DNA damage (SOS response), including recA and lexA. In the presence of single-stranded DNA, RecA interacts with LexA causing an autocatalytic cleavage which disrupts the DNA-binding part of LexA, leading to derepression of the SOS regulon and eventually DNA repair. The chain is LexA repressor from Rhodospirillum centenum (strain ATCC 51521 / SW).